Consider the following 275-residue polypeptide: 3-methyl-2-oxobutanoate hydroxymethyltransferase (275 aa).

2 residues coordinate Mg(2+): aspartate 49 and aspartate 88. 3-methyl-2-oxobutanoate is bound by residues 49-50 (DS), aspartate 88, and lysine 118. Mg(2+) is bound at residue glutamate 120. Glutamate 187 acts as the Proton acceptor in catalysis.

The protein belongs to the PanB family. As to quaternary structure, homodecamer; pentamer of dimers. It depends on Mg(2+) as a cofactor.

Its subcellular location is the cytoplasm. The catalysed reaction is 3-methyl-2-oxobutanoate + (6R)-5,10-methylene-5,6,7,8-tetrahydrofolate + H2O = 2-dehydropantoate + (6S)-5,6,7,8-tetrahydrofolate. It functions in the pathway cofactor biosynthesis; (R)-pantothenate biosynthesis; (R)-pantoate from 3-methyl-2-oxobutanoate: step 1/2. Its function is as follows. Catalyzes the reversible reaction in which hydroxymethyl group from 5,10-methylenetetrahydrofolate is transferred onto alpha-ketoisovalerate to form ketopantoate. The protein is 3-methyl-2-oxobutanoate hydroxymethyltransferase of Brucella melitensis biotype 1 (strain ATCC 23456 / CCUG 17765 / NCTC 10094 / 16M).